Consider the following 337-residue polypeptide: Peptide methionine sulfoxide reductase MsrA/MsrB (337 aa).

Residues 28–181 are peptide methionine sulfoxide reductase A; sequence KDIYLAGGCF…PGGYCHVDLS (154 aa). The active site involves C36. In terms of domain architecture, MsrB spans 198–321; it reads KDELKAKLSD…NGASLKFIPL (124 aa). The active-site Nucleophile is the C310.

The protein in the N-terminal section; belongs to the MsrA Met sulfoxide reductase family. This sequence in the C-terminal section; belongs to the MsrB Met sulfoxide reductase family.

It carries out the reaction L-methionyl-[protein] + [thioredoxin]-disulfide + H2O = L-methionyl-(S)-S-oxide-[protein] + [thioredoxin]-dithiol. The enzyme catalyses [thioredoxin]-disulfide + L-methionine + H2O = L-methionine (S)-S-oxide + [thioredoxin]-dithiol. The catalysed reaction is L-methionyl-[protein] + [thioredoxin]-disulfide + H2O = L-methionyl-(R)-S-oxide-[protein] + [thioredoxin]-dithiol. Has an important function as a repair enzyme for proteins that have been inactivated by oxidation. Catalyzes the reversible oxidation-reduction of methionine sulfoxide in proteins to methionine. In Campylobacter fetus, this protein is Peptide methionine sulfoxide reductase MsrA/MsrB (msrAB).